Consider the following 320-residue polypeptide: Ferrochelatase (320 aa).

Fe cation contacts are provided by His-194 and Glu-275.

It belongs to the ferrochelatase family.

Its subcellular location is the cytoplasm. It catalyses the reaction heme b + 2 H(+) = protoporphyrin IX + Fe(2+). The protein operates within porphyrin-containing compound metabolism; protoheme biosynthesis; protoheme from protoporphyrin-IX: step 1/1. Catalyzes the ferrous insertion into protoporphyrin IX. The protein is Ferrochelatase of Serratia proteamaculans (strain 568).